The sequence spans 112 residues: Peptidyl-tRNA hydrolase (112 aa).

The interval glutamate 64–aspartate 99 is disordered.

Belongs to the PTH2 family.

It is found in the cytoplasm. The catalysed reaction is an N-acyl-L-alpha-aminoacyl-tRNA + H2O = an N-acyl-L-amino acid + a tRNA + H(+). Its function is as follows. The natural substrate for this enzyme may be peptidyl-tRNAs which drop off the ribosome during protein synthesis. The polypeptide is Peptidyl-tRNA hydrolase (Halobacterium salinarum (strain ATCC 29341 / DSM 671 / R1)).